The chain runs to 362 residues: Alcohol dehydrogenase 13 (362 aa).

Zn(2+) is bound by residues cysteine 51, histidine 73, cysteine 104, cysteine 107, cysteine 110, cysteine 118, and cysteine 168. Histidine 73 contributes to the substrate binding site. Residues 193 to 198 (GLGGLG) and 280 to 282 (VGA) each bind NAD(+).

Belongs to the zinc-containing alcohol dehydrogenase family. Class-III subfamily. In terms of assembly, homodimer. The cofactor is Zn(2+).

The sequence is that of Alcohol dehydrogenase 13 from Catharanthus roseus (Madagascar periwinkle).